The primary structure comprises 70 residues: MLKIILIHIIKFYRKYISPLKKPCCRFYPTCSKYALDAINKYGAFKGSIMAIKRILRCHPFNPGGYDPVK.

The protein belongs to the UPF0161 family.

It is found in the cell membrane. Functionally, could be involved in insertion of integral membrane proteins into the membrane. The protein is Putative membrane protein insertion efficiency factor of Clostridium novyi (strain NT).